The following is a 309-amino-acid chain: Tagatose-6-phosphate kinase 1 (309 aa).

It belongs to the carbohydrate kinase PfkB family. LacC subfamily.

The catalysed reaction is D-tagatofuranose 6-phosphate + ATP = D-tagatofuranose 1,6-bisphosphate + ADP + H(+). The protein operates within carbohydrate metabolism; D-tagatose 6-phosphate degradation; D-glyceraldehyde 3-phosphate and glycerone phosphate from D-tagatose 6-phosphate: step 1/2. This is Tagatose-6-phosphate kinase 1 from Streptococcus agalactiae serotype III (strain NEM316).